The chain runs to 560 residues: Terminal uridylyltransferase Tailor (560 aa).

The tract at residues 169-197 (EQHPKPNPNNQPVQPHPTHQTKQEKKQAQ) is disordered. The span at 176-188 (PNNQPVQPHPTHQ) shows a compositional bias: low complexity. Positions 278 and 280 each coordinate Mg(2+). In terms of domain architecture, PAP-associated spans 455-522 (LRNFFAYFAK…VVQDPIQLNH (68 aa)).

Mg(2+) serves as cofactor.

It localises to the cytoplasm. The catalysed reaction is RNA(n) + UTP = RNA(n)-3'-uridine ribonucleotide + diphosphate. In terms of biological role, uridylyltransferase which mediates terminal uridylation of miRNAs, leading to their degradation. Has high specificity for splicing-derived miRNAs (mirtrons) and other miRNA substrates containing a 3'-G terminal nucleotide. Appears to be a major suppressor of mirtron biogenesis. The polypeptide is Terminal uridylyltransferase Tailor (Drosophila melanogaster (Fruit fly)).